The sequence spans 305 residues: 2-oxoacid:ferredoxin oxidoreductase subunit beta (305 aa).

[4Fe-4S] cluster contacts are provided by Cys12, Cys15, and Cys46. Thiamine diphosphate contacts are provided by residues 44 to 47 (IGCS) and His65. Asp90 contacts Mg(2+). 91 to 92 (GD) contributes to the thiamine diphosphate binding site. Positions 118 and 120 each coordinate Mg(2+). Residue 122–123 (GL) participates in thiamine diphosphate binding. Residue Cys197 participates in [4Fe-4S] cluster binding.

Heterodimer composed of an alpha and a beta subunit. [4Fe-4S] cluster serves as cofactor. The cofactor is thiamine diphosphate. It depends on Mg(2+) as a cofactor.

It carries out the reaction a 2-oxocarboxylate + 2 oxidized [2Fe-2S]-[ferredoxin] + CoA = an acyl-CoA + 2 reduced [2Fe-2S]-[ferredoxin] + CO2 + H(+). Its function is as follows. Catalyzes the coenzyme A-dependent oxidative decarboxylation of different 2-oxoacids such as 2-oxoglutarate, pyruvate and 2-oxobutyrate to form their CoA derivatives. The chain is 2-oxoacid:ferredoxin oxidoreductase subunit beta from Saccharolobus solfataricus (Sulfolobus solfataricus).